Consider the following 73-residue polypeptide: Beta-defensin 10 (73 aa).

The signal sequence occupies residues 1-23; it reads MRTLCSLLLICCLLFSYTTPAVG. 3 cysteine pairs are disulfide-bonded: Cys37/Cys66, Cys44/Cys59, and Cys49/Cys67.

This sequence belongs to the beta-defensin family. As to expression, expressed in both adult and neonate brain, and very weakly in kidneys, epididymis, and testis.

The protein localises to the secreted. Has antibacterial activity. The sequence is that of Beta-defensin 10 (Defb10) from Mus musculus (Mouse).